A 209-amino-acid polypeptide reads, in one-letter code: Orotate phosphoribosyltransferase (209 aa).

Residues R96, K100, H102, and 122–130 (EDLISTGGS) each bind 5-phospho-alpha-D-ribose 1-diphosphate. S126 contributes to the orotate binding site.

Belongs to the purine/pyrimidine phosphoribosyltransferase family. PyrE subfamily. In terms of assembly, homodimer. Requires Mg(2+) as cofactor.

The catalysed reaction is orotidine 5'-phosphate + diphosphate = orotate + 5-phospho-alpha-D-ribose 1-diphosphate. Its pathway is pyrimidine metabolism; UMP biosynthesis via de novo pathway; UMP from orotate: step 1/2. Functionally, catalyzes the transfer of a ribosyl phosphate group from 5-phosphoribose 1-diphosphate to orotate, leading to the formation of orotidine monophosphate (OMP). In Streptococcus agalactiae serotype III (strain NEM316), this protein is Orotate phosphoribosyltransferase.